The following is a 452-amino-acid chain: Glycine receptor subunit alpha-2 (452 aa).

Residues 1–27 form the signal peptide; the sequence is MYRQLVNILTALFAFFLGTNHFREAFC. The Extracellular portion of the chain corresponds to 28–256; the sequence is KDHDSRSGKH…KFHLERQMGY (229 aa). The N-linked (GlcNAc...) asparagine glycan is linked to Asn-72. Residue Arg-99 coordinates glycine. Arg-99 lines the strychnine pocket. Asn-103 carries an N-linked (GlcNAc...) asparagine glycan. Ser-163 serves as a coordination point for glycine. Residues Cys-172 and Cys-186 are joined by a disulfide bond. 2 residues coordinate Zn(2+): Glu-226 and Glu-228. Residues Cys-232 and Cys-243 are joined by a disulfide bond. A glycine-binding site is contributed by Thr-238. His-249 provides a ligand contact to Zn(2+). A helical membrane pass occupies residues 257–278; that stretch reads YLIQMYIPSLLIVILSWVSFWI. Topologically, residues 279–283 are cytoplasmic; sequence NMDAA. A helical membrane pass occupies residues 284–304; the sequence is PARVALGITTVLTMTTQSSGS. Residues 305-315 are Extracellular-facing; that stretch reads RASLPKVSYVK. Residues 316 to 336 traverse the membrane as a helical segment; it reads AIDIWMAVCLLFVFAALLEYA. The Cytoplasmic segment spans residues 337 to 420; sequence AVNFVSRQHK…FVDRAKRIDT (84 aa). The chain crosses the membrane as a helical span at residues 421-441; it reads ISRAAFPLAFLIFNIFYWITY. The Extracellular portion of the chain corresponds to 442–452; the sequence is KIIRHEDVHKK.

The protein belongs to the ligand-gated ion channel (TC 1.A.9) family. Glycine receptor (TC 1.A.9.3) subfamily. GLRA2 sub-subfamily. In terms of assembly, interacts with GLRB. Heteropentamer composed of GLRA2 and GLRB; functional GLRB-GLRA2 heteropentamers contain four GLRA2 subunits and one GLRB subunit, although alternative subunit composition cannot be excluded. Homopentamer (in vitro). Both homopentamers and heteropentamers form functional ion channels, but their characteristics are subtly different. As to expression, detected in the retina inner plexiform layer (at protein level). Detected in neonate retina. Detected in brain. Detected in spinal cord, with higher levels in the dorsal horn.

It localises to the postsynaptic cell membrane. It is found in the synapse. The protein localises to the cell membrane. Its subcellular location is the cell projection. It carries out the reaction chloride(in) = chloride(out). Channel opening is triggered by extracellular glycine. Channel opening is also triggered by taurine and beta-alanine. Inhibited by strychnine. Inhibited by picrotoxin. In terms of biological role, subunit of heteromeric glycine-gated chloride channels. Plays a role in synaptic plasticity. Contributes to the generation of inhibitory postsynaptic currents, and is involved in the down-regulation of neuronal excitability. Plays a role in cellular responses to ethanol. The polypeptide is Glycine receptor subunit alpha-2 (Mus musculus (Mouse)).